We begin with the raw amino-acid sequence, 225 residues long: Small ribosomal subunit protein uS3 (225 aa).

The 69-residue stretch at 38-106 folds into the KH type-2 domain; it reads IRKFIQSRFS…PVNLNIIEVK (69 aa).

It belongs to the universal ribosomal protein uS3 family. In terms of assembly, part of the 30S ribosomal subunit. Forms a tight complex with proteins S10 and S14.

Functionally, binds the lower part of the 30S subunit head. Binds mRNA in the 70S ribosome, positioning it for translation. This chain is Small ribosomal subunit protein uS3, found in Leptospira borgpetersenii serovar Hardjo-bovis (strain JB197).